Consider the following 237-residue polypeptide: Lectin (237 aa).

The N-linked (GlcNAc...) asparagine glycan is linked to N69. I106 carries the blocked amino end (Ile) modification. The Mn(2+) site is built by E115 and D117. Ca(2+)-binding residues include D117, Y120, N122, and D127. Mn(2+)-binding residues include D127 and H132.

Belongs to the leguminous lectin family. In terms of assembly, tetramer of two alpha and two beta chains. The N-terminus of alpha chain is blocked. The alpha and beta chains are produced by proteolytic processing, with probably the loss of intervening amino acid(s).

Functionally, D-mannose/D-glucose-binding lectin. Requires Ca(2+) and Mn(2+) ions for full activity. This chain is Lectin, found in Lablab purpureus (Hyacinth bean).